A 364-amino-acid chain; its full sequence is tRNA 2-selenouridine synthase (364 aa).

In terms of domain architecture, Rhodanese spans 14 to 137 (LLADTPLIDV…LRQTAIQATW (124 aa)). The S-selanylcysteine intermediate role is filled by cysteine 97.

Belongs to the SelU family. In terms of assembly, monomer.

The catalysed reaction is 5-methylaminomethyl-2-thiouridine(34) in tRNA + selenophosphate + (2E)-geranyl diphosphate + H2O + H(+) = 5-methylaminomethyl-2-selenouridine(34) in tRNA + (2E)-thiogeraniol + phosphate + diphosphate. The enzyme catalyses 5-methylaminomethyl-2-thiouridine(34) in tRNA + (2E)-geranyl diphosphate = 5-methylaminomethyl-S-(2E)-geranyl-thiouridine(34) in tRNA + diphosphate. It catalyses the reaction 5-methylaminomethyl-S-(2E)-geranyl-thiouridine(34) in tRNA + selenophosphate + H(+) = 5-methylaminomethyl-2-(Se-phospho)selenouridine(34) in tRNA + (2E)-thiogeraniol. It carries out the reaction 5-methylaminomethyl-2-(Se-phospho)selenouridine(34) in tRNA + H2O = 5-methylaminomethyl-2-selenouridine(34) in tRNA + phosphate. Its function is as follows. Involved in the post-transcriptional modification of the uridine at the wobble position (U34) of tRNA(Lys), tRNA(Glu) and tRNA(Gln). Catalyzes the conversion of 2-thiouridine (S2U-RNA) to 2-selenouridine (Se2U-RNA). Acts in a two-step process involving geranylation of 2-thiouridine (S2U) to S-geranyl-2-thiouridine (geS2U) and subsequent selenation of the latter derivative to 2-selenouridine (Se2U) in the tRNA chain. In Salmonella enteritidis PT4 (strain P125109), this protein is tRNA 2-selenouridine synthase.